A 402-amino-acid polypeptide reads, in one-letter code: Acetylornithine aminotransferase (402 aa).

Pyridoxal 5'-phosphate is bound by residues 106 to 107 (GA) and phenylalanine 132. Position 135 (arginine 135) interacts with N(2)-acetyl-L-ornithine. Residue 217–220 (DEVQ) coordinates pyridoxal 5'-phosphate. Lysine 247 is modified (N6-(pyridoxal phosphate)lysine). Threonine 275 lines the N(2)-acetyl-L-ornithine pocket. Threonine 276 is a pyridoxal 5'-phosphate binding site.

It belongs to the class-III pyridoxal-phosphate-dependent aminotransferase family. ArgD subfamily. As to quaternary structure, homodimer. Pyridoxal 5'-phosphate is required as a cofactor.

Its subcellular location is the cytoplasm. It catalyses the reaction N(2)-acetyl-L-ornithine + 2-oxoglutarate = N-acetyl-L-glutamate 5-semialdehyde + L-glutamate. Its pathway is amino-acid biosynthesis; L-arginine biosynthesis; N(2)-acetyl-L-ornithine from L-glutamate: step 4/4. The polypeptide is Acetylornithine aminotransferase (Streptomyces coelicolor (strain ATCC BAA-471 / A3(2) / M145)).